The following is a 504-amino-acid chain: 2,3-bisphosphoglycerate-independent phosphoglycerate mutase (504 aa).

Residues D11 and S61 each contribute to the Mn(2+) site. S61 acts as the Phosphoserine intermediate in catalysis. Residues H122, 152–153 (RD), R183, R189, 255–258 (RNDR), and K329 each bind substrate. The Mn(2+) site is built by D396, H400, D437, H438, and H455.

This sequence belongs to the BPG-independent phosphoglycerate mutase family. Monomer. The cofactor is Mn(2+).

The enzyme catalyses (2R)-2-phosphoglycerate = (2R)-3-phosphoglycerate. It participates in carbohydrate degradation; glycolysis; pyruvate from D-glyceraldehyde 3-phosphate: step 3/5. Functionally, catalyzes the interconversion of 2-phosphoglycerate and 3-phosphoglycerate. This is 2,3-bisphosphoglycerate-independent phosphoglycerate mutase from Bacteroides fragilis (strain YCH46).